Consider the following 1012-residue polypeptide: DNA polymerase catalytic subunit (1012 aa).

The protein belongs to the DNA polymerase type-B family.

Its subcellular location is the host nucleus. The catalysed reaction is DNA(n) + a 2'-deoxyribonucleoside 5'-triphosphate = DNA(n+1) + diphosphate. Functionally, replicates viral genomic DNA. The polypeptide is DNA polymerase catalytic subunit (U38) (Human herpesvirus 6B (strain Z29) (HHV-6 variant B)).